The chain runs to 305 residues: Phosphatidate cytidylyltransferase (305 aa).

8 helical membrane passes run F27–L47, F67–C87, F96–V116, L124–I144, I150–L170, T202–S222, I232–G252, and M277–I297.

It belongs to the CDS family.

The protein resides in the cell membrane. The enzyme catalyses a 1,2-diacyl-sn-glycero-3-phosphate + CTP + H(+) = a CDP-1,2-diacyl-sn-glycerol + diphosphate. The protein operates within phospholipid metabolism; CDP-diacylglycerol biosynthesis; CDP-diacylglycerol from sn-glycerol 3-phosphate: step 3/3. This chain is Phosphatidate cytidylyltransferase (cdsA), found in Chlamydia trachomatis serovar D (strain ATCC VR-885 / DSM 19411 / UW-3/Cx).